Reading from the N-terminus, the 3019-residue chain is Genome polyprotein (3019 aa).

The residue at position 2 (S2) is an N-acetylserine; by host. The segment at 2–23 (STLPKPQRITKRNINRRPQDVK) is interaction with STAT1. The interaction with EIF2AK2/PKR stretch occupies residues 2–58 (STLPKPQRITKRNINRRPQDVKFPGGGQIVGGVYVLPRRGPKLGVRAVRKTSERSQP). The interaction with DDX3X stretch occupies residues 2-59 (STLPKPQRITKRNINRRPQDVKFPGGGQIVGGVYVLPRRGPKLGVRAVRKTSERSQPR). The tract at residues 2–75 (STLPKPQRIT…PRARRTEGRS (74 aa)) is disordered. The Cytoplasmic segment spans residues 2–168 (STLPKPQRIT…EDGINFATGN (167 aa)). 2 short sequence motifs (nuclear localization signal) span residues 5 to 13 (PKPQRITKR) and 38 to 43 (PRRGPK). A Phosphoserine; by host modification is found at S53. Short sequence motifs (nuclear localization signal) lie at residues 58–64 (PRSRRQP) and 66–71 (PRARRT). Over residues 58 to 68 (PRSRRQPIPRA) the composition is skewed to basic residues. Phosphoserine; by host occurs at positions 99 and 116. The tract at residues 112–152 (PRRRSRNLGKVIDTLTCGFADLMGYIPLVGAPVGGVARALA) is important for endoplasmic reticulum and mitochondrial localization. An interaction with APOA2 region spans residues 122 to 173 (VIDTLTCGFADLMGYIPLVGAPVGGVARALAHGVRALEDGINFATGNLPGCS). Residues 164–167 (FATG) form an important for lipid droplets localization region. Residues 169–189 (LPGCSFSIFLLALLSCLLTPT) traverse the membrane as a helical segment. The propeptide at 178-191 (LLALLSCLLTPTAG) is ER anchor for the core protein, removed in mature form by host signal peptidase. The Lumenal portion of the chain corresponds to 190–358 (AGLEYRNASG…IGAHWGVMAG (169 aa)). N-linked (GlcNAc...) asparagine; by host glycans are attached at residues N196, N209, and N234. The segment at 265-296 (MVGAATLCSALYVGDLCGALFLVGQGFSWRHR) is important for fusion. The N-linked (GlcNAc...) asparagine; by host glycan is linked to N305. Residues 359-379 (VAYYSMQGNWAKVFLVLCLFS) form a helical membrane-spanning segment. At 380–730 (GVDASTTITG…WEFVILIFLL (351 aa)) the chain is on the lumenal side. The HVR1 stretch occupies residues 385–412 (TTITGGVAASGAFTITSLFSTGAKQPLH). 3 N-linked (GlcNAc...) (high mannose) asparagine; by host glycosylation sites follow: N417, N423, and N430. 4 disulfide bridges follow: C429–C553, C452–C459, C487–C495, and C504–C509. A glycan (N-linked (GlcNAc...) asparagine; by host) is linked at N448. Residues 475–479 (ANISG) are HVR2. N476 carries an N-linked (GlcNAc...) asparagine; by host glycan. The tract at residues 481–494 (SSEKPYCWHYAPRP) is CD81-binding 1. N533 carries N-linked (GlcNAc...) asparagine; by host glycosylation. Residues 545 to 552 (PPTEPWFG) are CD81-binding 2. N-linked (GlcNAc...) asparagine; by host glycosylation is present at N557. Cystine bridges form between C565–C570, C586–C590, C602–C625, and C612–C649. Residues N628 and N650 are each glycosylated (N-linked (GlcNAc...) (high mannose) asparagine; by host). The cysteines at positions 657 and 682 are disulfide-linked. The segment at 665–676 (SEMYPLLHSTTE) is PKR/eIF2-alpha phosphorylation homology domain (PePHD). Residues 731–751 (LADARVCVVLWMMMLISQAEA) form a helical membrane-spanning segment. The Lumenal portion of the chain corresponds to 752-762 (ALENLIVLNAI). The helical transmembrane segment at 763–783 (SAAGTHGIWWSLVAFCVAWHV) threads the bilayer. Residues 784-786 (RGR) are Cytoplasmic-facing. Residues 787–808 (IFPIAVYSIVGLWPLLLLVLML) traverse the membrane as a helical segment. The Lumenal portion of the chain corresponds to 809–818 (PYRAYAWTGT). The chain crosses the membrane as a helical span at residues 819-839 (DTSTLGAGVLSLFALFTLSPW). Over 840–843 (YKHW) the chain is Cytoplasmic. A helical transmembrane segment spans residues 844 to 863 (IARLIWWNQYTIARCEAALQ). At 864-886 (IWVPPLLARGARDGIILLAGLFY) the chain is on the lumenal side. A helical transmembrane segment spans residues 887–907 (PALVFDITKLLLAILGPLYIL). Positions 908-1031 (QASLVRVPYF…DYRSMGWRLL (124 aa)) constitute a Peptidase C18 domain. Over 908-1662 (QASLVRVPYF…CMAADLEVAT (755 aa)) the chain is Cytoplasmic. Positions 909–1211 (ASLVRVPYFV…PVESLSAQTR (303 aa)) are protease NS2-3. C927 carries S-palmitoyl cysteine; by host lipidation. The tract at residues 934 to 954 (TGGKYVQMVLLALARGFNTYL) is interaction with host SCPS1. Catalysis depends on for protease NS2 activity; shared with dimeric partner residues H957, E977, and C998. The 182-residue stretch at 1032–1213 (APITAHAQQT…ESLSAQTRSP (182 aa)) folds into the Peptidase S29 domain. Catalysis depends on charge relay system; for serine protease NS3 activity residues H1088 and D1112. Residues C1128 and C1130 each contribute to the Zn(2+) site. The Charge relay system; for serine protease NS3 activity role is filled by S1170. Zn(2+) is bound by residues C1176 and H1180. 1235-1242 (APTGSGES) lines the ATP pocket. Residues S1242 and E1322 each contribute to the Mg(2+) site. Residues 1321 to 1324 (DECH) carry the DECH box motif. A Helicase C-terminal domain is found at 1366–1543 (NIEEVALTGE…ELTPSETTVR (178 aa)). The interval 1482–1505 (VPQDAVSRSQRRGRTGRGKSGTYR) is disordered. An RNA-binding region spans residues 1491–1503 (QRRGRTGRGKSGT). A helical membrane pass occupies residues 1663–1683 (SAWVLLGGVMAALTAYCLSVG). Positions 1684-1695 (SVVIVGHLVLGG) are NS3-binding. The Cytoplasmic segment spans residues 1684 to 1810 (SVVIVGHLVL…SVTSPLTTNQ (127 aa)). The chain crosses the membrane as a helical span at residues 1811 to 1829 (TLLFNIMGGWVASNLAPPP). Topologically, residues 1830–1833 (ASTA) are lumenal. A helical membrane pass occupies residues 1834 to 1854 (FVVSGLAGAAVGSIGLGKVLL). A topological domain (cytoplasmic) is located at residue D1855. Residues 1856 to 1876 (ILAGYGAGVAGALVAFKIMGG) form a helical membrane-spanning segment. Residues 1877-1886 (EMPSTEDMVN) are Lumenal-facing. A helical transmembrane segment spans residues 1887-1907 (LLPAILSPGALVVGVICAAIL). At 1908–1977 (RRHVGPGEGA…WINEDYPTPC (70 aa)) the chain is on the cytoplasmic side. C1977 is lipidated: S-palmitoyl cysteine; by host. The stretch at 1978-2007 (DGNWLYDIWNWVCTVLADFKLWLGAKILPK) is an intramembrane region. Topologically, residues 2008-2998 (MPGIPFLSCQ…YHSVSRARSR (991 aa)) are cytoplasmic. C2016, C2034, C2036, and C2057 together coordinate Zn(2+). Residues 2125–2213 (EFFTELDGVR…ASSSASQLSA (89 aa)) are FKBP8-binding. The transcriptional activation stretch occupies residues 2125–2337 (EFFTELDGVR…PVPPPRRKRT (213 aa)). An interaction with non-structural protein 4A region spans residues 2140–2144 (PVCRP). Positions 2191 to 2225 (AKRRLDRGSPPSLASSSASQLSAPSRKATCTTHGR) are disordered. The segment at 2194–2446 (RLDRGSPPSL…ALITPCAAEE (253 aa)) is interaction with host SKP2. Residues S2199, S2202, S2206, S2209, S2212, and S2215 each carry the phosphoserine; by host modification. A compositionally biased stretch (low complexity) spans 2199–2215 (SPPSLASSSASQLSAPS). The ISDR stretch occupies residues 2215-2254 (SRKATCTTHGRHPDAELITANLLWRQEMGSNITRVESESK). The tract at residues 2215 to 2280 (SRKATCTTHG…DELSVAAECF (66 aa)) is interaction with EIF2AK2/PKR. Residues 2254–2311 (KVVILDSFEPLRACDDEDELSVAAECFKKPPKYPPALPIWARPDYNPPLVEPWKDPDY) are NS4B-binding. The V3 stretch occupies residues 2304-2382 (EPWKDPDYVP…GTQSGSLTGP (79 aa)). The short motif at 2327–2330 (PPVP) is the SH3-binding element. The Nuclear localization signal motif lies at 2332-2340 (PRRKRTIVL). A Glycyl lysine isopeptide (Lys-Gly) (interchain with G-Cter in ubiquitin) cross-link involves residue K2355. The segment at 2356-2417 (SFPQPTCSAE…PDLSSGSWST (62 aa)) is disordered. Residues 2369–2381 (TSGVGTQSGSLTG) show a composition bias toward polar residues. Residues S2457 and S2470 each carry the phosphoserine; by host modification. A RdRp catalytic domain is found at 2642 to 2760 (PLGFSYDTRC…IAESAGIDED (119 aa)). Mg(2+) is bound by residues D2648, D2746, and D2747. A helical transmembrane segment spans residues 2999–3019 (HLLLGLLLLTVGVGIFLLPAR).

It belongs to the hepacivirus polyprotein family. As to quaternary structure, homooligomer. Interacts with E1 (via C-terminus). Interacts with the non-structural protein 5A. Interacts (via N-terminus) with host STAT1 (via SH2 domain); this interaction results in decreased STAT1 phosphorylation and ubiquitin-mediated proteasome-dependent STAT1 degradation, leading to decreased IFN-stimulated gene transcription. Interacts with host STAT3; this interaction constitutively activates STAT3. Interacts with host LTBR receptor. Interacts with host TNFRSF1A receptor and possibly induces apoptosis. Interacts with host HNRPK. Interacts with host YWHAE. Interacts with host UBE3A/E6AP. Interacts with host DDX3X. Interacts with host APOA2. Interacts with host RXRA protein. Interacts with host SP110 isoform 3/Sp110b; this interaction sequesters the transcriptional corepressor SP110 away from the nucleus. Interacts with host CREB3 nuclear transcription protein; this interaction triggers cell transformation. Interacts with host ACY3. Interacts with host C1QR1. Interacts with host RBM24; this interaction, which enhances the interaction of the mature core protein with 5'-UTR, may inhibit viral translation and favor replication. Interacts with host EIF2AK2/PKR; this interaction induces the autophosphorylation of EIF2AK2. Part of the viral assembly initiation complex composed of NS2, E1, E2, NS3, NS4A, NS5A and the mature core protein. In terms of assembly, forms a heterodimer with envelope glycoprotein E2. Interacts with mature core protein. Interacts with protease NS2. The heterodimer E1/E2 interacts with host CLDN1; this interaction plays a role in viral entry into host cell. Interacts with host SPSB2 (via C-terminus). Part of the viral assembly initiation complex composed of NS2, E1, E2, NS3, NS4A, NS5A and the mature core protein. Interacts with host NEURL3; this interaction prevents E1 binding to glycoprotein E2. Forms a heterodimer with envelope glycoprotein E1. Interacts with host CD81 and SCARB1 receptors; these interactions play a role in viral entry into host cell. Interacts with host EIF2AK2/PKR; this interaction inhibits EIF2AK2 and probably allows the virus to evade the innate immune response. Interacts with host CD209/DC-SIGN and CLEC4M/DC-SIGNR. Interact with host SPCS1; this interaction is essential for viral particle assembly. Interacts with protease NS2. The heterodimer E1/E2 interacts with host CLDN1; this interaction plays a role in viral entry into host cell. Part of the viral assembly initiation complex composed of NS2, E1, E2, NS3, NS4A, NS5A and the mature core protein. Interacts with host SLC3A2/4F2hc; the interaction may facilitate viral entry into host cell. Interacts with human PLSCR1. As to quaternary structure, homohexamer. Homoheptamer. Interacts with protease NS2. In terms of assembly, homodimer. Interacts with host SPCS1; this interaction is essential for viral particle assembly. Interacts with envelope glycoprotein E1. Interacts with envelope glycoprotein E2. Interacts with viroporin p7. Interacts with serine protease/helicase NS3. Part of the replication complex composed of NS2, NS3, NS4A, NS4B, NS5A and the RNA-directed RNA polymerase embedded in an ER-derived membranous web. Part of the viral assembly initiation complex composed of NS2, E1, E2, NS3, NS4A, NS5A and the mature core protein. Interacts with protease NS2. Interacts with non-structural protein 4A; this interaction stabilizes the folding of NS3 serine protease. NS3-NS4A interaction is essential for NS3 activation and allows membrane anchorage of the latter. NS3/NS4A complex also prevents phosphorylation of host IRF3, thus preventing the establishment of dsRNA induced antiviral state. Interacts with host MAVS; this interaction leads to the cleavage and inhibition of host MAVS. Interacts with host TICAM1; this interaction leads to the cleavage and inhibition of host TICAM1. Interacts with host TANK-binding kinase/TBK1; this interaction results in the inhibition of the association between TBK1 and IRF3, which leads to the inhibition of IRF3 activation. Interacts with host RBM24. Part of the replication complex composed of NS2, NS3, NS4A, NS4B, NS5A and the RNA-directed RNA polymerase embedded in an ER-derived membranous web. Part of the viral assembly initiation complex composed of NS2, E1, E2, NS3, NS4A, NS5A and the mature core protein. As to quaternary structure, interacts with NS3 serine protease; this interaction stabilizes the folding of NS3 serine protease. NS3-NS4A interaction is essential for NS3 activation and allows membrane anchorage of the latter. Interacts with non-structural protein 5A (via N-terminus). Part of the replication complex composed of NS2, NS3, NS4A, NS4B, NS5A and the RNA-directed RNA polymerase embedded in an ER-derived membranous web. Part of the viral assembly initiation complex composed of NS2, E1, E2, NS3, NS4A, NS5A and the mature core protein. In terms of assembly, homomultimer. Interacts with non-structural protein NS5A. Interacts with host PLA2G4C; this interaction likely initiates the recruitment of replication complexes to lipid droplets. Interacts with host STING; this interaction disrupts the interaction between STING and TBK1 thereby suppressing the interferon signaling. Part of the replication complex composed of NS2, NS3, NS4A, NS4B, NS5A and the RNA-directed RNA polymerase embedded in an ER-derived membranous web. Monomer. Homodimer; dimerization is required for RNA-binding. Interacts with the mature core protein. Interacts (via N-terminus) with non-structural protein 4A. Interacts with non-structural protein 4B. Interacts (via region D2) with RNA-directed RNA polymerase. Part of the viral assembly initiation complex composed of NS2, E1, E2, NS3, NS4A, NS5A and the mature core protein. Part of the replication complex composed of NS2, NS3, NS4A, NS4B, NS5A and the RNA-directed RNA polymerase embedded in an ER-derived membranous web. Interacts with host GRB2. Interacts with host BIN1. Interacts with host PIK3R1. Interacts with host SRCAP. Interacts with host FKBP8. Interacts (via C-terminus) with host VAPB (via MSP domain). Interacts with host EIF2AK2/PKR; this interaction leads to disruption of EIF2AK2 dimerization by NS5A and probably allows the virus to evade the innate immune response. Interacts (via N-terminus) with host PACSIN2 (via N-terminus); this interaction attenuates protein kinase C alpha-mediated phosphorylation of PACSIN2 by disrupting the interaction between PACSIN2 and PRKCA. Interacts (via N-terminus) with host SRC kinase (via SH2 domain). Interacts with most Src-family kinases. Interacts with host IFI27 and SKP2; promotes the ubiquitin-mediated proteasomal degradation of NS5A. Interacts with host GPS2. Interacts with host TNFRSF21; this interaction allows the modulation by the virus of JNK, p38 MAPK, STAT3, and Akt signaling pathways in a DR6-dependent manner. Interacts (via N-terminus) with host CIDEB (via N-terminus); this interaction seems to regulate the association of HCV particles with APOE. Interacts with host CHKA/Choline Kinase-alpha; CHKA bridges host PI4KA and NS5A and potentiates NS5A-stimulated PI4KA activity, which then facilitates the targeting of the ternary complex to the ER for viral replication. Interacts with host SPSB2 (via C-terminus); this interaction targets NS5A for ubiquitination and degradation. Interacts with host RAB18; this interaction may promote the association of NS5A and other replicase components with lipid droplets. Interacts (via region D2) with host PPIA/CYPA; the interaction stimulates RNA-binding ability of NS5A and is dependent on the peptidyl-prolyl cis-trans isomerase activity of PPIA/CYPA. Interacts with host TRIM14; this interaction induces the degradation of NS5A. As to quaternary structure, homooligomer. Interacts with non-structural protein 5A. Interacts with host VAPB. Interacts with host PRK2/PKN2. Interacts with host HNRNPA1 and SEPT6; these interactions facilitate viral replication. Part of the replication complex composed of NS2, NS3, NS4A, NS4B, NS5A and the RNA-directed RNA polymerase. Zn(2+) is required as a cofactor. The cofactor is Mg(2+). In terms of processing, specific enzymatic cleavages in vivo yield mature proteins. The structural proteins, core, E1, E2 and p7 are produced by proteolytic processing by host signal peptidases. The core protein precursor is synthesized as a 23 kDa, which is retained in the ER membrane through the hydrophobic signal peptide. Cleavage by the signal peptidase releases the 21 kDa mature core protein. The cleavage of the core protein precursor occurs between aminoacids 176 and 188 but the exact cleavage site is not known. Some degraded forms of the core protein appear as well during the course of infection. The other proteins (p7, NS2, NS3, NS4A, NS4B, NS5A and NS5B) are cleaved by the viral proteases. Autoprocessing between NS2 and NS3 is mediated by the NS2 cysteine protease catalytic domain and regulated by the NS3 N-terminal domain. Phosphorylated by host PKC and PKA. Post-translationally, ubiquitinated; mediated by UBE3A and leading to core protein subsequent proteasomal degradation. In terms of processing, highly N-glycosylated. Palmitoylation is required for NS2/3 autoprocessing and E2 recruitment to membranes. Post-translationally, palmitoylated. This modification may play a role in its polymerization or in protein-protein interactions. In terms of processing, phosphorylated on serines in a basal form termed p56. p58 is a hyperphosphorylated form of p56. p56 and p58 coexist in the cell in roughly equivalent amounts. Hyperphosphorylation is dependent on the presence of NS4A. Host CSNK1A1/CKI-alpha or RPS6KB1 kinases may be responsible for NS5A phosphorylation. Tyrosine phosphorylation is essential for the interaction with host SRC. Post-translationally, ubiquitinated. Ubiquitination, most probably at Lys-2355, mediated by host IFI27 and SKP2 leads to proteasomal degradation, restricting viral infection. Ubiquitination by host TRIM22 leads to interruption of viral replication. In terms of processing, the N-terminus is phosphorylated by host PRK2/PKN2.

It localises to the host endoplasmic reticulum membrane. Its subcellular location is the host mitochondrion membrane. The protein resides in the virion. It is found in the host cytoplasm. The protein localises to the host nucleus. It localises to the host lipid droplet. Its subcellular location is the virion membrane. The protein resides in the host mitochondrion. It is found in the host cell membrane. The protein localises to the host perinuclear region. The enzyme catalyses Hydrolysis of four peptide bonds in the viral precursor polyprotein, commonly with Asp or Glu in the P6 position, Cys or Thr in P1 and Ser or Ala in P1'.. It carries out the reaction a ribonucleoside 5'-triphosphate + H2O = a ribonucleoside 5'-diphosphate + phosphate + H(+). It catalyses the reaction ATP + H2O = ADP + phosphate + H(+). The catalysed reaction is RNA(n) + a ribonucleoside 5'-triphosphate = RNA(n+1) + diphosphate. Its activity is regulated as follows. Inhibited by the antiviral drug hexamethylene amiloride. Inhibition by amantadine appears to be genotype-dependent. Also inhibited by long-alkyl-chain iminosugar derivatives. With respect to regulation, activity is up-regulated by PRK2/PKN2-mediated phosphorylation. Functionally, packages viral RNA to form a viral nucleocapsid, and promotes virion budding. Participates in the viral particle production as a result of its interaction with the non-structural protein 5A. Binds RNA and may function as a RNA chaperone to induce the RNA structural rearrangements taking place during virus replication. Modulates viral translation initiation by interacting with viral IRES and 40S ribosomal subunit. Affects various cell signaling pathways, host immunity and lipid metabolism. Prevents the establishment of cellular antiviral state by blocking the interferon-alpha/beta (IFN-alpha/beta) and IFN-gamma signaling pathways and by blocking the formation of phosphorylated STAT1 and promoting ubiquitin-mediated proteasome-dependent degradation of STAT1. Activates STAT3 leading to cellular transformation. Regulates the activity of cellular genes, including c-myc and c-fos. May repress the promoter of p53, and sequester CREB3 and SP110 isoform 3/Sp110b in the cytoplasm. Represses cell cycle negative regulating factor CDKN1A, thereby interrupting an important check point of normal cell cycle regulation. Targets transcription factors involved in the regulation of inflammatory responses and in the immune response: suppresses TNF-induced NF-kappa-B activation, and activates AP-1. Binds to dendritic cells (DCs) via C1QR1, resulting in down-regulation of T-lymphocytes proliferation. Alters lipid metabolism by interacting with hepatocellular proteins involved in lipid accumulation and storage. Induces up-regulation of FAS promoter activity, and thereby contributes to the increased triglyceride accumulation in hepatocytes (steatosis). In terms of biological role, forms a heterodimer with envelope glycoprotein E2, which mediates virus attachment to the host cell, virion internalization through clathrin-dependent endocytosis and fusion with host membrane. Fusion with the host cell is most likely mediated by both E1 and E2, through conformational rearrangements of the heterodimer required for fusion rather than a classical class II fusion mechanism. E1/E2 heterodimer binds host apolipoproteins such as APOB and ApoE thereby forming a lipo-viro-particle (LVP). APOE associated to the LVP allows the initial virus attachment to cell surface receptors such as the heparan sulfate proteoglycans (HSPGs), syndecan-1 (SDC1), syndecan-1 (SDC2), the low-density lipoprotein receptor (LDLR) and scavenger receptor class B type I (SCARB1). The cholesterol transfer activity of SCARB1 allows E2 exposure and binding of E2 to SCARB1 and the tetraspanin CD81. E1/E2 heterodimer binding on CD81 activates the epithelial growth factor receptor (EGFR) signaling pathway. Diffusion of the complex E1-E2-EGFR-SCARB1-CD81 to the cell lateral membrane allows further interaction with Claudin 1 (CLDN1) and occludin (OCLN) to finally trigger HCV entry. Its function is as follows. Forms a heterodimer with envelope glycoprotein E1, which mediates virus attachment to the host cell, virion internalization through clathrin-dependent endocytosis and fusion with host membrane. Fusion with the host cell is most likely mediated by both E1 and E2, through conformational rearrangements of the heterodimer required for fusion rather than a classical class II fusion mechanism. The interaction between envelope glycoprotein E2 and host apolipoprotein E/APOE allows the proper assembly, maturation and infectivity of the viral particles. This interaction is probably promoted via the up-regulation of cellular autophagy by the virus. E1/E2 heterodimer binds host apolipoproteins such as APOB and APOE thereby forming a lipo-viro-particle (LVP). APOE associated to the LVP allows the initial virus attachment to cell surface receptors such as the heparan sulfate proteoglycans (HSPGs), syndecan-1 (SDC1), syndecan-1 (SDC2), the low-density lipoprotein receptor (LDLR) and scavenger receptor class B type I (SCARB1). The cholesterol transfer activity of SCARB1 allows E2 exposure and binding of E2 to SCARB1 and the tetraspanin CD81. E1/E2 heterodimer binding on CD81 activates the epithelial growth factor receptor (EGFR) signaling pathway. Diffusion of the complex E1-E2-EGFR-SCARB1-CD81 to the cell lateral membrane allows further interaction with Claudin 1 (CLDN1) and occludin (OCLN) to finally trigger HCV entry. Inhibits host EIF2AK2/PKR activation, preventing the establishment of an antiviral state. Viral ligand for CD209/DC-SIGN and CLEC4M/DC-SIGNR, which are respectively found on dendritic cells (DCs), and on liver sinusoidal endothelial cells and macrophage-like cells of lymph node sinuses. These interactions allow the capture of circulating HCV particles by these cells and subsequent facilitated transmission to permissive cells such as hepatocytes and lymphocyte subpopulations. The interaction between E2 and host amino acid transporter complex formed by SLC3A2 and SLC7A5/LAT1 may facilitate viral entry into host cell. Ion channel protein that acts as a viroporin and plays an essential role in the assembly, envelopment and secretion of viral particles. Regulates the host cell secretory pathway, which induces the intracellular retention of viral glycoproteins and favors assembly of viral particles. Creates a pore in acidic organelles and releases Ca(2+) and H(+) in the cytoplasm of infected cells, leading to a productive viral infection. High levels of cytoplasmic Ca(2+) may trigger membrane trafficking and transport of viral ER-associated proteins to viroplasms, sites of viral genome replication. This ionic imbalance induces the assembly of the inflammasome complex, which triggers the maturation of pro-IL-1beta into IL-1beta through the action of caspase-1. Targets also host mitochondria and induces mitochondrial depolarization. In addition of its role as a viroporin, acts as a lipid raft adhesion factor. Functionally, cysteine protease required for the proteolytic auto-cleavage between the non-structural proteins NS2 and NS3. The N-terminus of NS3 is required for the function of NS2 protease (active region NS2-3). Promotes the initiation of viral particle assembly by mediating the interaction between structural and non-structural proteins. In terms of biological role, displays three enzymatic activities: serine protease with a chymotrypsin-like fold, NTPase and RNA helicase. NS3 serine protease, in association with NS4A, is responsible for the cleavages of NS3-NS4A, NS4A-NS4B, NS4B-NS5A and NS5A-NS5B. The NS3/NS4A complex prevents phosphorylation of host IRF3, thus preventing the establishment of dsRNA induced antiviral state. The NS3/NS4A complex induces host amino acid transporter component SLC3A2, thus contributing to HCV propagation. NS3 RNA helicase binds to RNA and unwinds both dsDNA and dsRNA in the 3' to 5' direction, and likely resolves RNA complicated stable secondary structures in the template strand. Binds a single ATP and catalyzes the unzipping of a single base pair of dsRNA. Inhibits host antiviral proteins TBK1 and IRF3 thereby preventing the establishment of an antiviral state. Cleaves host MAVS/CARDIF thereby preventing the establishment of an antiviral state. Cleaves host TICAM1/TRIF, thereby disrupting TLR3 signaling and preventing the establishment of an antiviral state. Its function is as follows. Induces a specific membrane alteration that serves as a scaffold for the virus replication complex. This membrane alteration gives rise to the so-called ER-derived membranous web that contains the replication complex. NS4B self-interaction contributes to its function in membranous web formation. Promotes host TRIF protein degradation in a CASP8-dependent manner thereby inhibiting host TLR3-mediated interferon signaling. Disrupts the interaction between STING and TBK1 contributing to the inhibition of interferon signaling. Phosphorylated protein that is indispensable for viral replication and assembly. Both hypo- and hyperphosphorylated states are required for the viral life cycle. The hyperphosphorylated form of NS5A is an inhibitor of viral replication. Involved in RNA-binding and especially in binding to the viral genome. Zinc is essential for RNA-binding. Participates in the viral particle production as a result of its interaction with the mature viral core protein. Its interaction with host VAPB may target the viral replication complex to vesicles. Down-regulates viral IRES translation initiation. Mediates interferon resistance, presumably by interacting with and inhibiting host EIF2AK2/PKR. Prevents BIN1-induced apoptosis. Acts as a transcriptional activator of some host genes important for viral replication when localized in the nucleus. Via the interaction with host PACSIN2, modulates lipid droplet formation in order to promote virion assembly. Modulates TNFRSF21/DR6 signaling pathway for viral propagation. Functionally, RNA-dependent RNA polymerase that performs primer-template recognition and RNA synthesis during viral replication. Initiates RNA transcription/replication at a flavin adenine dinucleotide (FAD), resulting in a 5'- FAD cap on viral RNAs. In this way, recognition of viral 5' RNA by host pattern recognition receptors can be bypassed, thereby evading activation of antiviral pathways. In Homo sapiens (Human), this protein is Genome polyprotein.